The following is a 197-amino-acid chain: Fe/S biogenesis protein NfuA (197 aa).

[4Fe-4S] cluster is bound by residues C155 and C158.

This sequence belongs to the NfuA family. As to quaternary structure, homodimer. Requires [4Fe-4S] cluster as cofactor.

In terms of biological role, involved in iron-sulfur cluster biogenesis. Binds a 4Fe-4S cluster, can transfer this cluster to apoproteins, and thereby intervenes in the maturation of Fe/S proteins. Could also act as a scaffold/chaperone for damaged Fe/S proteins. In Pseudomonas savastanoi pv. phaseolicola (strain 1448A / Race 6) (Pseudomonas syringae pv. phaseolicola (strain 1448A / Race 6)), this protein is Fe/S biogenesis protein NfuA.